The primary structure comprises 240 residues: Probable ATP synthase 24 kDa subunit, mitochondrial (240 aa).

Residues 1 to 32 (MAYASRFLSRSKQLQGGLVILQQQHAIPVRAF) constitute a mitochondrion transit peptide. Composition is skewed to basic and acidic residues over residues 210 to 222 (AVEA…KKEE) and 229 to 240 (PDVKSLDIRNFI). Residues 210–240 (AVEAMESQKKKEEFQDEEMPDVKSLDIRNFI) form a disordered region.

It localises to the mitochondrion. It is found in the mitochondrion inner membrane. Its function is as follows. Mitochondrial membrane ATP synthase (F(1)F(0) ATP synthase or Complex V) produces ATP from ADP in the presence of a proton gradient across the membrane which is generated by electron transport complexes of the respiratory chain. F-type ATPases consist of two structural domains, F(1) - containing the extramembraneous catalytic core and F(0) - containing the membrane proton channel, linked together by a central stalk and a peripheral stalk. During catalysis, ATP synthesis in the catalytic domain of F(1) is coupled via a rotary mechanism of the central stalk subunits to proton translocation. Part of the complex F(0) domain. This Arabidopsis thaliana (Mouse-ear cress) protein is Probable ATP synthase 24 kDa subunit, mitochondrial.